A 150-amino-acid chain; its full sequence is MSTVPVVQGAGSSNSAQDISTSSVPLTLQGRISNLLSSTAFKVGLVVMGLLLVMATIFLVSAASFVNPIYLAIPAIVGCVNICVGILSMEGYCSPERWSLCKKVLKASEDIIDDGQINNSNKVFTDERLNAIGGVVESLSRRNSLVDQTQ.

Residues 1 to 20 (MSTVPVVQGAGSSNSAQDIS) are disordered. 2 helical membrane passes run 43–63 (VGLV…VSAA) and 69–89 (IYLA…ILSM).

It localises to the membrane. The chain is Sulfur-rich protein, serovars L1/L3 (srp) from Chlamydia trachomatis.